A 1328-amino-acid chain; its full sequence is Protein turtle homolog B (1328 aa).

Residues 1-20 (MIWYVATLIASVISTRGLVA) form the signal peptide. Residues 21 to 722 (QVAHGLREEP…DLTDDGLARP (702 aa)) are Extracellular-facing. 5 consecutive Ig-like domains span residues 30 to 115 (PEFV…ECKV), 139 to 226 (PTFT…LLVQ), 228 to 320 (PPFI…AYLT), 324 to 415 (PARV…ARLV), and 420 to 504 (PYFT…THLT). Cystine bridges form between C45–C113 and C161–C208. N-linked (GlcNAc...) asparagine glycans are attached at residues N241 and N258. 3 disulfides stabilise this stretch: C250–C303, C346–C397, and C442–C488. 2 Fibronectin type-III domains span residues 512 to 604 (APGS…TLAF) and 614 to 708 (LVTP…STDI). An N-linked (GlcNAc...) asparagine glycan is attached at N624. A helical membrane pass occupies residues 723 to 743 (VLAGIVATICFLAAAILFSTL). Residues 744 to 1328 (AACFVNKQRK…EPPTTLPTSG (585 aa)) lie on the Cytoplasmic side of the membrane. Disordered stretches follow at residues 758–817 (RKKD…EKEL), 914–1040 (PMSS…PEPW), and 1107–1328 (SPGR…PTSG). Phosphoserine occurs at positions 775, 783, and 794. The segment covering 990–1001 (SPLSSVMSSPPL) has biased composition (low complexity). Polar residues-rich tracts occupy residues 1018 to 1033 (ENASNSTLPLTQTPTG), 1129 to 1141 (LVSQGQLRHTSQG), and 1199 to 1214 (SRLSPLTQSPLSSRTG). Position 1136 is an omega-N-methylarginine (R1136). Phosphoserine occurs at positions 1207 and 1215. A compositionally biased stretch (low complexity) spans 1246 to 1273 (SFSRKSTPSSTGSPSQSSRSGSPSYRPT). Pro residues-rich tracts occupy residues 1284–1295 (PSPPPGPAPPAP) and 1318–1328 (PEPPTTLPTSG).

Belongs to the immunoglobulin superfamily. Turtle family. As to quaternary structure, found in a complex with MAGI2 and NLGN2, where it interacts with MAGI2 (via PDZ 5 and PDZ 6 domains). N-glycosylated and sialylated. Not significantly O-glycosylated. In terms of tissue distribution, detected primarily in brain, including cortex, hippocampus, cerebellum and striatum. Largely restricted to inhibitory GABAergic interneurons (at protein level).

It is found in the postsynaptic cell membrane. It localises to the postsynaptic density. Functionally, transmembrane protein which is abundantly expressed in interneurons, where it may regulate inhibitory synapse development. May mediate homophilic cell adhesion. This Rattus norvegicus (Rat) protein is Protein turtle homolog B.